Reading from the N-terminus, the 240-residue chain is UDP-2,3-diacylglucosamine hydrolase (240 aa).

Positions 8, 10, 41, 79, and 114 each coordinate Mn(2+). 79-80 (NR) lines the substrate pocket. The substrate site is built by Asp-122, Ser-160, Thr-164, Lys-167, and His-195. The Mn(2+) site is built by His-195 and His-197.

This sequence belongs to the LpxH family. Mn(2+) is required as a cofactor.

The protein resides in the cell inner membrane. It carries out the reaction UDP-2-N,3-O-bis[(3R)-3-hydroxytetradecanoyl]-alpha-D-glucosamine + H2O = 2-N,3-O-bis[(3R)-3-hydroxytetradecanoyl]-alpha-D-glucosaminyl 1-phosphate + UMP + 2 H(+). It participates in glycolipid biosynthesis; lipid IV(A) biosynthesis; lipid IV(A) from (3R)-3-hydroxytetradecanoyl-[acyl-carrier-protein] and UDP-N-acetyl-alpha-D-glucosamine: step 4/6. In terms of biological role, hydrolyzes the pyrophosphate bond of UDP-2,3-diacylglucosamine to yield 2,3-diacylglucosamine 1-phosphate (lipid X) and UMP by catalyzing the attack of water at the alpha-P atom. Involved in the biosynthesis of lipid A, a phosphorylated glycolipid that anchors the lipopolysaccharide to the outer membrane of the cell. The chain is UDP-2,3-diacylglucosamine hydrolase from Pseudomonas aeruginosa (strain UCBPP-PA14).